The primary structure comprises 120 residues: Aspartate 1-decarboxylase (120 aa).

Catalysis depends on Ser-25, which acts as the Schiff-base intermediate with substrate; via pyruvic acid. Ser-25 is modified (pyruvic acid (Ser)). Thr-57 lines the substrate pocket. Tyr-58 (proton donor) is an active-site residue. Substrate is bound at residue 73 to 75 (GAA).

It belongs to the PanD family. In terms of assembly, heterooctamer of four alpha and four beta subunits. It depends on pyruvate as a cofactor. In terms of processing, is synthesized initially as an inactive proenzyme, which is activated by self-cleavage at a specific serine bond to produce a beta-subunit with a hydroxyl group at its C-terminus and an alpha-subunit with a pyruvoyl group at its N-terminus.

Its subcellular location is the cytoplasm. The enzyme catalyses L-aspartate + H(+) = beta-alanine + CO2. It functions in the pathway cofactor biosynthesis; (R)-pantothenate biosynthesis; beta-alanine from L-aspartate: step 1/1. Its function is as follows. Catalyzes the pyruvoyl-dependent decarboxylation of aspartate to produce beta-alanine. The protein is Aspartate 1-decarboxylase of Polynucleobacter asymbioticus (strain DSM 18221 / CIP 109841 / QLW-P1DMWA-1) (Polynucleobacter necessarius subsp. asymbioticus).